Reading from the N-terminus, the 198-residue chain is Recombination protein RecR (198 aa).

The C4-type zinc-finger motif lies at 57-72 (CSICCNLSEHDPCPIC). In terms of domain architecture, Toprim spans 80-175 (NIVCVVETPQ…KVTRLGYGLP (96 aa)).

It belongs to the RecR family.

Functionally, may play a role in DNA repair. It seems to be involved in an RecBC-independent recombinational process of DNA repair. It may act with RecF and RecO. This chain is Recombination protein RecR, found in Endomicrobium trichonymphae.